The following is a 371-amino-acid chain: N-acetyldiaminopimelate deacetylase (371 aa).

Residue Asp-68 is part of the active site. Glu-127 serves as the catalytic Proton acceptor.

Belongs to the peptidase M20A family. N-acetyldiaminopimelate deacetylase subfamily.

The catalysed reaction is N-acetyl-(2S,6S)-2,6-diaminopimelate + H2O = (2S,6S)-2,6-diaminopimelate + acetate. Its pathway is amino-acid biosynthesis; L-lysine biosynthesis via DAP pathway; LL-2,6-diaminopimelate from (S)-tetrahydrodipicolinate (acetylase route): step 3/3. Functionally, catalyzes the conversion of N-acetyl-diaminopimelate to diaminopimelate and acetate. The chain is N-acetyldiaminopimelate deacetylase from Halalkalibacterium halodurans (strain ATCC BAA-125 / DSM 18197 / FERM 7344 / JCM 9153 / C-125) (Bacillus halodurans).